Consider the following 449-residue polypeptide: Histone PARylation factor 1-like (449 aa).

The CCHC-type zinc-finger motif lies at 3-28 (KEDCKYWDKCYQQNPAHLSKYNHPKK). Residues 18-93 (AHLSKYNHPK…AKGSYEAETE (76 aa)) form a disordered region. 2 stretches are compositionally biased toward basic and acidic residues: residues 28 to 41 (KQQE…EGKK) and 54 to 69 (EQKK…KDKS). Residue S72 is modified to Phosphoserine. Catalysis depends on E384, which acts as the Proton donor.

It belongs to the HPF1 family.

Its subcellular location is the chromosome. It localises to the nucleus. Its function is as follows. Cofactor for serine ADP-ribosylation that confers serine specificity on Parp. Switches the amino acid specificity of Parp from aspartate or glutamate to serine residues. Acts by completing the active site of Parp: forms a composite active site composed of residues from HPF1/CG1218 and Parp. The protein is Histone PARylation factor 1-like of Drosophila melanogaster (Fruit fly).